A 716-amino-acid chain; its full sequence is MVKLTACLLLLVAAVQAKLPVTPISQLRAESHRNKALVARSQDVNAAFPAHTIQIPIDHFPKSSRYEPHTTEKFNLRYWFDASHYKEGGPVIILHGGETSGEGRIPFLQKGILAQLAQATNGIGVIMEHRYYGGSLPTPDFSNKSLRFLTTEQALADTAYFSKNIKFPGLEKYNLTAPGTAHILYGGSYAGGQVAFLRTQYPDIFWGAISSSGVTKAIYDYWQYFEPIRQEAPQDCVHVTQNFVDIVDNIIINGKNANTTRELKNLFGLGRLRDADFANALSSGITGWQSTNWDPAISGKSFYQYCGEITSDRYLYPVTAQQKASAKRIIEAGGHGREAPEILPQLLNFVGWLNKSTLESCSGQGQTAEECLNSYDEAFYKQDNADQSWRAWPWQYCNEWGYLQTGSGAPKNIRPVISRLIDLPYTSNICKQAFGITKPSNVDLVNKYGAFDIEYDRLAFVDGGSDPWKEAGVHATAARKRGTSTNKPFILIPDAVHHWDENGLYPNETTAELPPQRIKEVQAEEARFVKEWMKVHIYIDHQTFTGIRKNLSLMNDELPAHVLPFLVPPTSTKNAVSPSHEQPADPRIAISSWACAGLSVVVARICCSPIGYRCPSRDLAAQPSKSKKDRRGQQLSPAAGDPIVCTGLTTRLGFVSFLVFAFSSFTFIPDIETLKAAVLRSGEVLWSHDAAAECCCVLSVLFAASCTESRKLRLDI.

The N-terminal stretch at 1 to 17 is a signal peptide; sequence MVKLTACLLLLVAAVQA. 2 N-linked (GlcNAc...) asparagine glycosylation sites follow: Asn-143 and Asn-174. Residue Ser-188 is the Charge relay system of the active site. N-linked (GlcNAc...) asparagine glycosylation is found at Asn-258 and Asn-354. The active-site Charge relay system is the Asp-466. Residues Asn-507 and Asn-550 are each glycosylated (N-linked (GlcNAc...) asparagine). The tract at residues 617–636 is disordered; the sequence is RDLAAQPSKSKKDRRGQQLS. Residues 652 to 672 traverse the membrane as a helical segment; that stretch reads LGFVSFLVFAFSSFTFIPDIE.

Belongs to the peptidase S28 family.

The protein localises to the membrane. It localises to the secreted. The chain is Probable extracellular serine carboxypeptidase from Arthroderma benhamiae (strain ATCC MYA-4681 / CBS 112371) (Trichophyton mentagrophytes).